Reading from the N-terminus, the 293-residue chain is 33 kDa chaperonin (293 aa).

Intrachain disulfides connect C238-C240 and C271-C274.

It belongs to the HSP33 family. In terms of processing, under oxidizing conditions two disulfide bonds are formed involving the reactive cysteines. Under reducing conditions zinc is bound to the reactive cysteines and the protein is inactive.

The protein localises to the cytoplasm. Its function is as follows. Redox regulated molecular chaperone. Protects both thermally unfolding and oxidatively damaged proteins from irreversible aggregation. Plays an important role in the bacterial defense system toward oxidative stress. The chain is 33 kDa chaperonin from Staphylococcus aureus (strain Mu3 / ATCC 700698).